The primary structure comprises 430 residues: Trigger factor (430 aa).

The PPIase FKBP-type domain occupies 163–248 (GDVVDVDYKG…LNSIKTSILP (86 aa)).

The protein belongs to the FKBP-type PPIase family. Tig subfamily.

It is found in the cytoplasm. The enzyme catalyses [protein]-peptidylproline (omega=180) = [protein]-peptidylproline (omega=0). Its function is as follows. Involved in protein export. Acts as a chaperone by maintaining the newly synthesized protein in an open conformation. Functions as a peptidyl-prolyl cis-trans isomerase. This chain is Trigger factor, found in Lawsonia intracellularis (strain PHE/MN1-00).